The primary structure comprises 398 residues: NADH-ubiquinone oxidoreductase 49 kDa subunit (398 aa).

This sequence belongs to the complex I 49 kDa subunit family.

It is found in the mitochondrion. It carries out the reaction a ubiquinone + NADH + 5 H(+)(in) = a ubiquinol + NAD(+) + 4 H(+)(out). In terms of biological role, core subunit of the mitochondrial membrane respiratory chain NADH dehydrogenase (Complex I) that is believed to belong to the minimal assembly required for catalysis. Complex I functions in the transfer of electrons from NADH to the respiratory chain. The immediate electron acceptor for the enzyme is believed to be ubiquinone. Component of the iron-sulfur (IP) fragment of the enzyme. Component of the iron-sulfur (IP) fragment of the enzyme. The polypeptide is NADH-ubiquinone oxidoreductase 49 kDa subunit (NAD7) (Cafeteria roenbergensis (Marine flagellate)).